The primary structure comprises 442 residues: Lipoyl synthase, apicoplast (442 aa).

The first 23 residues, 1–23, serve as a signal peptide directing secretion; that stretch reads MRVLTPSLYIYAFFIFCVRFKCG. The segment at 104-154 is disordered; that stretch reads LGEHQLKGKRKESATNVEKEKKEKEQQEERLPVPKVGNKMPEKKPDWFHVP. The span at 114 to 135 shows a compositional bias: basic and acidic residues; that stretch reads KESATNVEKEKKEKEQQEERLP. [4Fe-4S] cluster-binding residues include Cys-177, Cys-182, Cys-188, Cys-203, Cys-207, Cys-210, and Ser-418. Positions 189-407 constitute a Radical SAM core domain; the sequence is WNIGTATIML…KEEGMKMGFK (219 aa).

Belongs to the radical SAM superfamily. Lipoyl synthase family. The cofactor is [4Fe-4S] cluster.

Its subcellular location is the plastid. The protein localises to the apicoplast. The catalysed reaction is [[Fe-S] cluster scaffold protein carrying a second [4Fe-4S](2+) cluster] + N(6)-octanoyl-L-lysyl-[protein] + 2 oxidized [2Fe-2S]-[ferredoxin] + 2 S-adenosyl-L-methionine + 4 H(+) = [[Fe-S] cluster scaffold protein] + N(6)-[(R)-dihydrolipoyl]-L-lysyl-[protein] + 4 Fe(3+) + 2 hydrogen sulfide + 2 5'-deoxyadenosine + 2 L-methionine + 2 reduced [2Fe-2S]-[ferredoxin]. The protein operates within protein modification; protein lipoylation via endogenous pathway; protein N(6)-(lipoyl)lysine from octanoyl-[acyl-carrier-protein]: step 2/2. In terms of biological role, catalyzes the radical-mediated insertion of two sulfur atoms into the C-6 and C-8 positions of the octanoyl moiety bound to the lipoyl domains of lipoate-dependent enzymes, thereby converting the octanoylated domains into lipoylated derivatives. This chain is Lipoyl synthase, apicoplast, found in Plasmodium knowlesi (strain H).